Consider the following 104-residue polypeptide: Large ribosomal subunit protein uL24 (104 aa).

The protein belongs to the universal ribosomal protein uL24 family. In terms of assembly, part of the 50S ribosomal subunit.

One of two assembly initiator proteins, it binds directly to the 5'-end of the 23S rRNA, where it nucleates assembly of the 50S subunit. Functionally, one of the proteins that surrounds the polypeptide exit tunnel on the outside of the subunit. This chain is Large ribosomal subunit protein uL24, found in Pseudoalteromonas translucida (strain TAC 125).